The following is a 290-amino-acid chain: tRNA dimethylallyltransferase (290 aa).

9–16 (GPTASGKT) serves as a coordination point for ATP. 11–16 (TASGKT) serves as a coordination point for substrate. The interaction with substrate tRNA stretch occupies residues 34 to 37 (DSTQ).

Belongs to the IPP transferase family. In terms of assembly, monomer. Mg(2+) serves as cofactor.

The catalysed reaction is adenosine(37) in tRNA + dimethylallyl diphosphate = N(6)-dimethylallyladenosine(37) in tRNA + diphosphate. Its function is as follows. Catalyzes the transfer of a dimethylallyl group onto the adenine at position 37 in tRNAs that read codons beginning with uridine, leading to the formation of N6-(dimethylallyl)adenosine (i(6)A). This is tRNA dimethylallyltransferase from Phytoplasma australiense.